Consider the following 311-residue polypeptide: Beta-ketoacyl-[acyl-carrier-protein] synthase III (311 aa).

Active-site residues include C114 and H238. The segment at 239-243 (QANIR) is ACP-binding. N268 is an active-site residue.

Belongs to the thiolase-like superfamily. FabH family. As to quaternary structure, homodimer.

It localises to the cytoplasm. It carries out the reaction malonyl-[ACP] + acetyl-CoA + H(+) = 3-oxobutanoyl-[ACP] + CO2 + CoA. Its pathway is lipid metabolism; fatty acid biosynthesis. Catalyzes the condensation reaction of fatty acid synthesis by the addition to an acyl acceptor of two carbons from malonyl-ACP. Catalyzes the first condensation reaction which initiates fatty acid synthesis and may therefore play a role in governing the total rate of fatty acid production. Possesses both acetoacetyl-ACP synthase and acetyl transacylase activities. Its substrate specificity determines the biosynthesis of branched-chain and/or straight-chain of fatty acids. In Neorickettsia sennetsu (strain ATCC VR-367 / Miyayama) (Ehrlichia sennetsu), this protein is Beta-ketoacyl-[acyl-carrier-protein] synthase III.